The sequence spans 351 residues: tRNA-specific 2-thiouridylase MnmA (351 aa).

6-13 contributes to the ATP binding site; it reads ALSGGTDS. Catalysis depends on Cys96, which acts as the Nucleophile. An intrachain disulfide couples Cys96 to Cys193. An ATP-binding site is contributed by Gly120. The segment at 143–145 is interaction with tRNA; the sequence is KDQ. Cys193 acts as the Cysteine persulfide intermediate in catalysis. The interval 298 to 299 is interaction with tRNA; the sequence is RY.

Belongs to the MnmA/TRMU family.

It is found in the cytoplasm. It catalyses the reaction S-sulfanyl-L-cysteinyl-[protein] + uridine(34) in tRNA + AH2 + ATP = 2-thiouridine(34) in tRNA + L-cysteinyl-[protein] + A + AMP + diphosphate + H(+). In terms of biological role, catalyzes the 2-thiolation of uridine at the wobble position (U34) of tRNA, leading to the formation of s(2)U34. The chain is tRNA-specific 2-thiouridylase MnmA from Nitratidesulfovibrio vulgaris (strain DSM 19637 / Miyazaki F) (Desulfovibrio vulgaris).